The primary structure comprises 112 residues: UPF0342 protein STH1710 (112 aa).

This sequence belongs to the UPF0342 family.

This chain is UPF0342 protein STH1710, found in Symbiobacterium thermophilum (strain DSM 24528 / JCM 14929 / IAM 14863 / T).